Reading from the N-terminus, the 418-residue chain is MRLLTRVLLVSLLTLSLVVSGLACGPGRGYGRRRHPKKLTPLAYKQFIPNVAEKTLGASGRYEGKITRNSERFKELTPNYNPDIIFKDEENTGADRLMTQRCKDKLNSLAISVMNHWPGVKLRVTEGWDEDGHHFEESLHYEGRAVDITTSDRDKSKYGTLSRLAVEAGFDWVYYESKAHIHCSVKAENSVAAKSGGCFPGSALVSLQDGGQKAVKDLNPGDKVLAADSAGNLVFSDFIMFTDRDSTTRRVFYVIETQEPVEKITLTAAHLLFVLDNSTEDLHTMTAAYASSVRAGQKVMVVDDSGQLKSVIVQRIYTEEQRGSFAPVTAHGTIVVDRILASCYAVIEDQGLAHLAFAPARLYYYVSSFLFPQNSSSRSNATLQQEGVHWYSRLLYQMGTWLLDSNMLHPLGMSVNSS.

A signal peptide spans 1–23; the sequence is MRLLTRVLLVSLLTLSLVVSGLA. A lipid anchor (N-palmitoyl cysteine) is attached at Cys-24. Positions 32–38 match the Cardin-Weintraub motif; sequence RRRHPKK. 7 residues coordinate Ca(2+): Glu-89, Glu-90, Asp-95, Thr-125, Glu-126, Asp-129, and Asp-131. 3 residues coordinate Zn(2+): His-140, Asp-147, and His-182. Gly-197 is lipidated: Cholesterol glycine ester.

Belongs to the hedgehog family. In terms of assembly, interacts with HHATL/GUP1 which negatively regulates HHAT-mediated palmitoylation of the SHH N-terminus. Interacts with BOC and CDON. Interacts with HHIP. Interacts with DISP1 via its cholesterol anchor. Interacts with SCUBE2. Multimer. Post-translationally, the C-terminal domain displays an autoproteolysis activity and a cholesterol transferase activity. Both activities result in the cleavage of the full-length protein and covalent attachment of a cholesterol moiety to the C-terminal of the newly generated N-terminal fragment (ShhN). Cholesterylation is required for the sonic hedgehog protein N-product targeting to lipid rafts and multimerization. ShhN is the active species in both local and long-range signaling, whereas the C-product (ShhC) is degraded in the reticulum endoplasmic. In terms of processing, N-palmitoylation by HHAT of ShhN is required for sonic hedgehog protein N-product multimerization and full activity. It is a prerequisite for the membrane-proximal positioning and the subsequent shedding of this N-terminal peptide. The lipidated N- and C-terminal peptides of ShhNp can be cleaved (shedding). The N-terminal palmitoylated peptide is cleaved at the Cardin-Weintraub (CW) motif site. The cleavage reduced the interactions with heparan sulfate. The cleavage is enhanced by SCUBE2. Expressed in the ventral midline of the neural tube and brain. Also found in the notochord and in developing fin bud. In the developing brain, expression occurs in domains that include a discrete region in the floor of the diencephalon.

It localises to the endoplasmic reticulum membrane. The protein localises to the golgi apparatus membrane. The protein resides in the cell membrane. It catalyses the reaction glycyl-L-cysteinyl-[protein] + cholesterol + H(+) = [protein]-C-terminal glycyl cholesterol ester + N-terminal L-cysteinyl-[protein]. Its function is as follows. The C-terminal part of the sonic hedgehog protein precursor displays an autoproteolysis and a cholesterol transferase activity. Both activities result in the cleavage of the full-length protein into two parts (ShhN and ShhC) followed by the covalent attachment of a cholesterol moiety to the C-terminal of the newly generated ShhN. Both activities occur in the endoplasmic reticulum. Once cleaved, ShhC is degraded in the endoplasmic reticulum. The dually lipidated sonic hedgehog protein N-product (ShhNp) is a morphogen which is essential for a variety of patterning events during development. Involved in dorso-ventral patterning of the brain and in early patterning of the developing eyes. Binds to the patched (PTCH1) receptor, which functions in association with smoothened (SMO), to activate the transcription of target genes. In the absence of SHH, PTCH1 represses the constitutive signaling activity of SMO. The polypeptide is Sonic hedgehog protein (shha) (Danio rerio (Zebrafish)).